We begin with the raw amino-acid sequence, 163 residues long: Putative pre-16S rRNA nuclease (163 aa).

It belongs to the YqgF nuclease family.

The protein resides in the cytoplasm. Could be a nuclease involved in processing of the 5'-end of pre-16S rRNA. This Rhodopseudomonas palustris (strain BisB18) protein is Putative pre-16S rRNA nuclease.